Reading from the N-terminus, the 266-residue chain is MPVITMKQLLEAGVHFGHRTRRWNPKMAPYIYGARKGIYIIDLQKTLKLVEEACDFVKSKASEGATMIFVGTKKQAQHVVKEEAGKCGAFYVNNRWLGGLITNFKTIKPRIDKLIELEEMEKNGELAKLPKKEQSRLRKALEKLRKNLGGLKAMDRIPDIIYVIDPRKERIAVAEANKMGIPVIGVVDTNCDPDPVDFVIPANDDAIRSIKLITSKIAEAYLEGREGVSFTEETPSEPIQSDSSEEEEGSLDISDLFEDTDLKEEE.

A disordered region spans residues 227 to 266 (GVSFTEETPSEPIQSDSSEEEEGSLDISDLFEDTDLKEEE). The segment covering 231 to 240 (TEETPSEPIQ) has biased composition (polar residues). The span at 243 to 266 (SSEEEEGSLDISDLFEDTDLKEEE) shows a compositional bias: acidic residues.

Belongs to the universal ribosomal protein uS2 family.

This is Small ribosomal subunit protein uS2 from Pseudothermotoga lettingae (strain ATCC BAA-301 / DSM 14385 / NBRC 107922 / TMO) (Thermotoga lettingae).